Here is a 372-residue protein sequence, read N- to C-terminus: Non-structural protein NS2 (372 aa).

The interval 259 to 326 (NQIEKQHTTH…QESEPESPSF (68 aa)) is disordered. The segment covering 299 to 309 (TETTSTSSSHH) has biased composition (low complexity).

The protein is Non-structural protein NS2 (NS) of Aedes albopictus (Asian tiger mosquito).